The chain runs to 180 residues: MSTNAIAKRYAKALVQLGSEAGTVDSFNTELDRFSALLTESRDLSAVFANPAYGIESKREVMKELVAKLQLSPMISNLLMLLLERGRISVLPEISQSYGAFADELSGVIRPTLSSGLPLEAGQIEEIRSALAKSTGKKVELKVEVDPSLIGGVVTKIGGKVFDGSVRTQLARIQDILQKG.

It belongs to the ATPase delta chain family. F-type ATPases have 2 components, F(1) - the catalytic core - and F(0) - the membrane proton channel. F(1) has five subunits: alpha(3), beta(3), gamma(1), delta(1), epsilon(1). F(0) has three main subunits: a(1), b(2) and c(10-14). The alpha and beta chains form an alternating ring which encloses part of the gamma chain. F(1) is attached to F(0) by a central stalk formed by the gamma and epsilon chains, while a peripheral stalk is formed by the delta and b chains.

The protein localises to the cell inner membrane. Functionally, f(1)F(0) ATP synthase produces ATP from ADP in the presence of a proton or sodium gradient. F-type ATPases consist of two structural domains, F(1) containing the extramembraneous catalytic core and F(0) containing the membrane proton channel, linked together by a central stalk and a peripheral stalk. During catalysis, ATP synthesis in the catalytic domain of F(1) is coupled via a rotary mechanism of the central stalk subunits to proton translocation. This protein is part of the stalk that links CF(0) to CF(1). It either transmits conformational changes from CF(0) to CF(1) or is implicated in proton conduction. The protein is ATP synthase subunit delta of Geobacter sp. (strain M21).